The primary structure comprises 390 residues: MNLHEYQSKHLLKKYNIPVPASEVVFNPDAAVDAAAKIGGDRWVVKAQVHAGGRGKAGGVRLVKNKEELKSAVKALLGTRLVTYQTDERGQPVNQILVEQTSDIARELYLGAVIDRASQRIVFMASTEGGVEIEKVAEKSPEKILKVTVDPAIGLQPFQCRQLFFGLGLQDLKQMRSFTDIVMGLYRLFTERDLSLLEINPLVITGSGELICLDAKINIDDSALYRQSELREMRDTTQEDEHETMAQQWELNYIKLDGNIGCMVNGAGLAMATMDLIKLSGGDPANFLDVGGSATKERVTEAFKIIASDKNVKGILVNIFGGIVRCDLIADGIISAVKEVGIDVPVVVRLEGNNAQLGAKKLADSGMNIIAAKGFADAAEQIVKQVGVIA.

Residues 9-245 (KHLLKKYNIP…TTQEDEHETM (237 aa)) enclose the ATP-grasp domain. Residues Lys-46, 53 to 55 (GRG), Glu-99, Ser-102, and Glu-107 each bind ATP. Mg(2+) contacts are provided by Asn-200 and Asp-214. Substrate-binding positions include Asn-265 and 322 to 324 (GIV).

This sequence belongs to the succinate/malate CoA ligase beta subunit family. In terms of assembly, heterotetramer of two alpha and two beta subunits. Requires Mg(2+) as cofactor.

It carries out the reaction succinate + ATP + CoA = succinyl-CoA + ADP + phosphate. The catalysed reaction is GTP + succinate + CoA = succinyl-CoA + GDP + phosphate. It functions in the pathway carbohydrate metabolism; tricarboxylic acid cycle; succinate from succinyl-CoA (ligase route): step 1/1. In terms of biological role, succinyl-CoA synthetase functions in the citric acid cycle (TCA), coupling the hydrolysis of succinyl-CoA to the synthesis of either ATP or GTP and thus represents the only step of substrate-level phosphorylation in the TCA. The beta subunit provides nucleotide specificity of the enzyme and binds the substrate succinate, while the binding sites for coenzyme A and phosphate are found in the alpha subunit. This is Succinate--CoA ligase [ADP-forming] subunit beta from Coxiella burnetii (strain CbuK_Q154) (Coxiella burnetii (strain Q154)).